Reading from the N-terminus, the 326-residue chain is uncharacterized protein (326 aa).

To B.subtilis XkdQ.

This is an uncharacterized protein from Bacillus subtilis (strain 168).